Consider the following 141-residue polypeptide: DUF35 domain-containing scaffold protein (141 aa).

The Zn(2+) site is built by Cys30, Cys33, Cys44, and Cys47.

It belongs to the scaffold protein DUF35 family. In terms of assembly, interacts with acetoacetyl-CoA thiolase and HMG-CoA synthase (HMGCS) that catalyzes the first and second step in the mevalonate pathway, respectively.

In terms of biological role, functions as a scaffold to connect the acetoacetyl-CoA thiolase and HMG-CoA synthase (HMGCS) dimers in the channeling thiolase/HMGCS complex, which allows for efficient coupling of the endergonic thiolase reaction with the exergonic HMGCS reaction. The chain is DUF35 domain-containing scaffold protein from Methanocaldococcus jannaschii (strain ATCC 43067 / DSM 2661 / JAL-1 / JCM 10045 / NBRC 100440) (Methanococcus jannaschii).